The following is a 519-amino-acid chain: ATP synthase subunit alpha, mitochondrial (519 aa).

Gly188–Ser195 is a binding site for ATP.

Belongs to the ATPase alpha/beta chains family. As to quaternary structure, F-type ATPases have 2 components, CF(1) - the catalytic core - and CF(0) - the membrane proton channel. CF(1) has five subunits: alpha(3), beta(3), gamma(1), delta(1), epsilon(1). CF(0) has three main subunits: a, b and c.

The protein resides in the mitochondrion. The protein localises to the mitochondrion inner membrane. Its function is as follows. Mitochondrial membrane ATP synthase (F(1)F(0) ATP synthase or Complex V) produces ATP from ADP in the presence of a proton gradient across the membrane which is generated by electron transport complexes of the respiratory chain. F-type ATPases consist of two structural domains, F(1) - containing the extramembraneous catalytic core, and F(0) - containing the membrane proton channel, linked together by a central stalk and a peripheral stalk. During catalysis, ATP synthesis in the catalytic domain of F(1) is coupled via a rotary mechanism of the central stalk subunits to proton translocation. Subunits alpha and beta form the catalytic core in F(1). Rotation of the central stalk against the surrounding alpha(3)beta(3) subunits leads to hydrolysis of ATP in three separate catalytic sites on the beta subunits. Subunit alpha does not bear the catalytic high-affinity ATP-binding sites. The polypeptide is ATP synthase subunit alpha, mitochondrial (atp1) (Dictyostelium citrinum (Slime mold)).